The sequence spans 264 residues: Thiazole synthase (264 aa).

Lys-106 serves as the catalytic Schiff-base intermediate with DXP. 1-deoxy-D-xylulose 5-phosphate is bound by residues Gly-167, 193–194, and 215–216; these read AG and NT.

This sequence belongs to the ThiG family. In terms of assembly, homotetramer. Forms heterodimers with either ThiH or ThiS.

Its subcellular location is the cytoplasm. It carries out the reaction [ThiS sulfur-carrier protein]-C-terminal-Gly-aminoethanethioate + 2-iminoacetate + 1-deoxy-D-xylulose 5-phosphate = [ThiS sulfur-carrier protein]-C-terminal Gly-Gly + 2-[(2R,5Z)-2-carboxy-4-methylthiazol-5(2H)-ylidene]ethyl phosphate + 2 H2O + H(+). The protein operates within cofactor biosynthesis; thiamine diphosphate biosynthesis. In terms of biological role, catalyzes the rearrangement of 1-deoxy-D-xylulose 5-phosphate (DXP) to produce the thiazole phosphate moiety of thiamine. Sulfur is provided by the thiocarboxylate moiety of the carrier protein ThiS. In vitro, sulfur can be provided by H(2)S. The sequence is that of Thiazole synthase from Xanthomonas axonopodis pv. citri (strain 306).